The following is a 740-amino-acid chain: Platelet endothelial cell adhesion molecule (740 aa).

A signal peptide spans 1–27 (MRLRWTQGGNMWLGVLLTLQLCSSLEG). The Extracellular portion of the chain corresponds to 28–602 (QENSFTINSI…VRVYLAPWKK (575 aa)). 3 consecutive Ig-like C2-type domains span residues 35–126 (NSIH…YKVV), 145–223 (GGVV…DSVR), and 236–315 (PKFH…SKVS). N-linked (GlcNAc...) asparagine glycosylation is found at Asn-52 and Asn-84. 3 disulfide bridges follow: Cys-57-Cys-109, Cys-152-Cys-206, and Cys-256-Cys-304. N-linked (GlcNAc...) asparagine glycans are attached at residues Asn-284, Asn-301, Asn-320, Asn-357, Asn-372, Asn-436, Asn-456, and Asn-552. Ig-like C2-type domains are found at residues 328 to 404 (PKLK…VQIA), 425 to 494 (GQTI…KVLR), and 500 to 592 (PVEE…NILA). Cystine bridges form between Cys-347/Cys-387, Cys-432/Cys-477, and Cys-524/Cys-573. The chain crosses the membrane as a helical span at residues 603–621 (GLIAVVVIAVIIAVLLLGA). At 622–740 (RFYFLKKSKA…SRTEGSLDGT (119 aa)) the chain is on the cytoplasmic side. 2 short sequence motifs (ITIM motif) span residues 690–695 (VEYTEV) and 713–718 (TVYSEI). Tyr-692 and Tyr-715 each carry phosphotyrosine; by FER. The disordered stretch occupies residues 697–740 (VTSPEPHRGLGTKGTETVYSEIRKADPDLVENRYSRTEGSLDGT). Residues 711–731 (TETVYSEIRKADPDLVENRYS) are membrane-bound segment which detaches upon phosphorylation. The span at 717-732 (EIRKADPDLVENRYSR) shows a compositional bias: basic and acidic residues. Positions 723 to 740 (PDLVENRYSRTEGSLDGT) are may play a role in cytoprotective signaling. Phosphoserine occurs at positions 731 and 736.

Trans-homodimer (via Ig-like C2-type 1 and Ig-like C2-type 2 domains); trans-homodimerization is required for cell-cell interaction. Forms a complex with BDKRB2 and GNAQ. Interacts with BDKRB2 and GNAQ. Interacts with PTPN11; Tyr-715 is critical for PTPN11 recruitment. Interacts with FER. Interacts with CD177; the interaction is Ca(2+)-dependent; the interaction is direct. Phosphorylated on Ser and Tyr residues by src kinases after cellular activation. Upon activation, phosphorylated on Ser-731 which probably initiates the dissociation of the membrane-interaction segment (residues 711-731) from the cell membrane allowing the sequential phosphorylation of Tyr-715 and Tyr-692. Constitutively phosphorylated on Ser-736 in resting platelets. Phosphorylated on tyrosine residues by FER and FES in response to FCER1 activation. In endothelial cells Fyn mediates mechanical-force (stretch or pull) induced tyrosine phosphorylation. In terms of processing, palmitoylation by ZDHHC21 is necessary for cell surface expression in endothelial cells and enrichment in membrane rafts.

The protein localises to the cell membrane. Its subcellular location is the membrane raft. It is found in the cell junction. In terms of biological role, cell adhesion molecule which is required for leukocyte transendothelial migration (TEM) under most inflammatory conditions. Tyr-692 plays a critical role in TEM and is required for efficient trafficking of PECAM1 to and from the lateral border recycling compartment (LBRC) and is also essential for the LBRC membrane to be targeted around migrating leukocytes. Trans-homophilic interaction may play a role in endothelial cell-cell adhesion via cell junctions. Heterophilic interaction with CD177 plays a role in transendothelial migration of neutrophils. Homophilic ligation of PECAM1 prevents macrophage-mediated phagocytosis of neighboring viable leukocytes by transmitting a detachment signal. Promotes macrophage-mediated phagocytosis of apoptotic leukocytes by tethering them to the phagocytic cells; PECAM1-mediated detachment signal appears to be disabled in apoptotic leukocytes. Modulates bradykinin receptor BDKRB2 activation. Regulates bradykinin- and hyperosmotic shock-induced ERK1/2 activation in endothelial cells. Induces susceptibility to atherosclerosis. The chain is Platelet endothelial cell adhesion molecule (PECAM1) from Sus scrofa (Pig).